The sequence spans 298 residues: MSNAREIRSKVQSVKNTQKITGAMELVAASKMRGTIVKMNNVRPYVESANTIIKNVTAASIDYPNPYLFDRDVKRVGYIVISTDRGLCGGLNINLFKHVLKEIKNNIEDRVGVDVCVIGSKAENFFAKLKDVNIVATAHYNDKDKEGSIRAIGGAVKVMLDKFTAGEIDRLYMSSNQFVSTIKQRPRLQTLLPIQDIFSAEEIKANKEKATKGHWDYIYERDIEEVLNALCIRYIEAQVRGAILENAACEQAARMMAMKNATDNASDIIDQLKLDYNKIRQAMITQELAEICSGAAAV.

The protein belongs to the ATPase gamma chain family. F-type ATPases have 2 components, CF(1) - the catalytic core - and CF(0) - the membrane proton channel. CF(1) has five subunits: alpha(3), beta(3), gamma(1), delta(1), epsilon(1). CF(0) has three main subunits: a, b and c.

It is found in the cell inner membrane. Produces ATP from ADP in the presence of a proton gradient across the membrane. The gamma chain is believed to be important in regulating ATPase activity and the flow of protons through the CF(0) complex. The protein is ATP synthase gamma chain of Francisella tularensis subsp. tularensis (strain WY96-3418).